Consider the following 153-residue polypeptide: MAKITGNLVATGLKFGIVTARFNDFINDKLLSGAIDTLVRHGAYENDIDTAWVPGAFEIPLVAKKMANSGKYDAVICLGTVIRGSTTHYDYVCNEAAKGIGAVALETGVPVIFGVLTTENIEQAIERAGTKAGNKGSECALGAIEIVNVLKAI.

Residues F22, 56–58 (AFE), and 80–82 (TVI) contribute to the 5-amino-6-(D-ribitylamino)uracil site. A (2S)-2-hydroxy-3-oxobutyl phosphate-binding site is contributed by 85–86 (ST). The active-site Proton donor is H88. Residue F113 participates in 5-amino-6-(D-ribitylamino)uracil binding. Position 127 (R127) interacts with (2S)-2-hydroxy-3-oxobutyl phosphate.

The protein belongs to the DMRL synthase family. As to quaternary structure, forms an icosahedral capsid composed of 60 subunits, arranged as a dodecamer of pentamers.

The enzyme catalyses (2S)-2-hydroxy-3-oxobutyl phosphate + 5-amino-6-(D-ribitylamino)uracil = 6,7-dimethyl-8-(1-D-ribityl)lumazine + phosphate + 2 H2O + H(+). It participates in cofactor biosynthesis; riboflavin biosynthesis; riboflavin from 2-hydroxy-3-oxobutyl phosphate and 5-amino-6-(D-ribitylamino)uracil: step 1/2. Catalyzes the formation of 6,7-dimethyl-8-ribityllumazine by condensation of 5-amino-6-(D-ribitylamino)uracil with 3,4-dihydroxy-2-butanone 4-phosphate. This is the penultimate step in the biosynthesis of riboflavin. The chain is 6,7-dimethyl-8-ribityllumazine synthase from Actinobacillus pleuropneumoniae (Haemophilus pleuropneumoniae).